A 161-amino-acid chain; its full sequence is Dihydrofolate reductase (161 aa).

Positions 2 to 161 (NISLIAAISK…YNYSFEILSR (160 aa)) constitute a DHFR domain. Substrate is bound at residue 6–8 (IAA). NADP(+) contacts are provided by residues 7–8 (AA) and 15–20 (IGYKNK). Aspartate 28 is a substrate binding site. Position 44–47 (44–47 (GRLT)) interacts with NADP(+). Residue arginine 59 coordinates substrate. NADP(+)-binding positions include 64–66 (ISS) and 96–101 (IGGAKI). Threonine 115 serves as a coordination point for substrate.

The protein belongs to the dihydrofolate reductase family.

The enzyme catalyses (6S)-5,6,7,8-tetrahydrofolate + NADP(+) = 7,8-dihydrofolate + NADPH + H(+). The protein operates within cofactor biosynthesis; tetrahydrofolate biosynthesis; 5,6,7,8-tetrahydrofolate from 7,8-dihydrofolate: step 1/1. Key enzyme in folate metabolism. Catalyzes an essential reaction for de novo glycine and purine synthesis, and for DNA precursor synthesis. The protein is Dihydrofolate reductase (folA) of Buchnera aphidicola subsp. Acyrthosiphon pisum (strain APS) (Acyrthosiphon pisum symbiotic bacterium).